A 296-amino-acid polypeptide reads, in one-letter code: Nucleotide-binding protein SAG0531 (296 aa).

13 to 20 (GMSGAGKT) is an ATP binding site. 63–66 (DMRS) lines the GTP pocket.

The protein belongs to the RapZ-like family.

In terms of biological role, displays ATPase and GTPase activities. This is Nucleotide-binding protein SAG0531 from Streptococcus agalactiae serotype V (strain ATCC BAA-611 / 2603 V/R).